A 425-amino-acid chain; its full sequence is RNA polymerase sigma factor SigA (425 aa).

Positions 193–263 (MVQSNLRLVV…TRAIADQSRT (71 aa)) are sigma-70 factor domain-2. The Interaction with polymerase core subunit RpoC signature appears at 217 to 220 (DLIQ). The interval 272–347 (ETISRIKKTT…EADGETPEDE (76 aa)) is sigma-70 factor domain-3. Residues 360–413 (VLDTLSPRERDVLRLRYGLDDGRMKTLEEIGQIFNVTRERIRQIEAKALRKLRH) are sigma-70 factor domain-4. The H-T-H motif DNA-binding region spans 386-405 (LEEIGQIFNVTRERIRQIEA).

It belongs to the sigma-70 factor family. RpoD/SigA subfamily. In terms of assembly, interacts transiently with the RNA polymerase catalytic core.

It localises to the cytoplasm. Its function is as follows. Sigma factors are initiation factors that promote the attachment of RNA polymerase to specific initiation sites and are then released. This sigma factor is the primary sigma factor during exponential growth. The chain is RNA polymerase sigma factor SigA from Synechocystis sp. (strain ATCC 27184 / PCC 6803 / Kazusa).